An 83-amino-acid chain; its full sequence is U25-theraphotoxin-Cg1a (83 aa).

The signal sequence occupies residues 1–23 (MRFHTLLFLSFLLLVSCALICTA). A propeptide spanning residues 24-48 (QHPGLKKSGMFHENVGKGQHIEKKR) is cleaved from the precursor. Cystine bridges form between C50/C66, C57/C71, and C65/C81.

It belongs to the neurotoxin 07 (Beta/delta-agtx) family. 03 (aga-4) subfamily. JZTX sub-subfamily. In terms of tissue distribution, expressed by the venom gland.

The protein localises to the secreted. In terms of biological role, inhibits TTX-sensitive sodium currents in rat dorsal root ganglion (DRG) neurons. This chain is U25-theraphotoxin-Cg1a, found in Chilobrachys guangxiensis (Chinese earth tiger tarantula).